The chain runs to 218 residues: 2-C-methyl-D-erythritol 4-phosphate cytidylyltransferase (218 aa).

Belongs to the IspD/TarI cytidylyltransferase family. IspD subfamily.

The catalysed reaction is 2-C-methyl-D-erythritol 4-phosphate + CTP + H(+) = 4-CDP-2-C-methyl-D-erythritol + diphosphate. Its pathway is isoprenoid biosynthesis; isopentenyl diphosphate biosynthesis via DXP pathway; isopentenyl diphosphate from 1-deoxy-D-xylulose 5-phosphate: step 2/6. Functionally, catalyzes the formation of 4-diphosphocytidyl-2-C-methyl-D-erythritol from CTP and 2-C-methyl-D-erythritol 4-phosphate (MEP). The chain is 2-C-methyl-D-erythritol 4-phosphate cytidylyltransferase from Chlamydia muridarum (strain MoPn / Nigg).